Here is a 93-residue protein sequence, read N- to C-terminus: RNA-binding protein Hfq (93 aa).

One can recognise a Sm domain in the interval 9–68 (DPFLNALRRERVPVSIYLVNGIKLQGQVESFDQFVILLKNTVSQMVYKHAISTVVPARPF). A disordered region spans residues 70–93 (VNSHTAAPSPAGGFNGQQDDNNDQ).

The protein belongs to the Hfq family. As to quaternary structure, homohexamer.

RNA chaperone that binds small regulatory RNA (sRNAs) and mRNAs to facilitate mRNA translational regulation in response to envelope stress, environmental stress and changes in metabolite concentrations. Also binds with high specificity to tRNAs. This chain is RNA-binding protein Hfq, found in Shewanella sediminis (strain HAW-EB3).